The sequence spans 229 residues: Secreted RxLR effector protein PITG_22926 (229 aa).

Residues Met-1 to Ser-23 form the signal peptide. A RxLR-dEER motif is present at residues Pro-34–Arg-45.

It belongs to the RxLR effector family.

It is found in the secreted. Its subcellular location is the host nucleus. Secreted effector that acts as a RNA silencing suppressor, probably by inhibiting the biogenesis of small RNAs in the host plant, to manipulate host immune responses and promote Phytophthora infection. The sequence is that of Secreted RxLR effector protein PITG_22926 from Phytophthora infestans (strain T30-4) (Potato late blight agent).